The sequence spans 378 residues: Transaldolase 1 (378 aa).

Lys146 acts as the Schiff-base intermediate with substrate in catalysis.

Belongs to the transaldolase family. Type 2 subfamily.

It is found in the cytoplasm. The catalysed reaction is D-sedoheptulose 7-phosphate + D-glyceraldehyde 3-phosphate = D-erythrose 4-phosphate + beta-D-fructose 6-phosphate. Its pathway is carbohydrate degradation; pentose phosphate pathway; D-glyceraldehyde 3-phosphate and beta-D-fructose 6-phosphate from D-ribose 5-phosphate and D-xylulose 5-phosphate (non-oxidative stage): step 2/3. Its function is as follows. Transaldolase is important for the balance of metabolites in the pentose-phosphate pathway. The sequence is that of Transaldolase 1 from Streptomyces avermitilis (strain ATCC 31267 / DSM 46492 / JCM 5070 / NBRC 14893 / NCIMB 12804 / NRRL 8165 / MA-4680).